Here is a 455-residue protein sequence, read N- to C-terminus: Ribulose bisphosphate carboxylase large chain (455 aa).

An N6,N6,N6-trimethyllysine modification is found at Lys5. Positions 114 and 164 each coordinate substrate. The Proton acceptor role is filled by Lys166. A substrate-binding site is contributed by Lys168. Lys192, Asp194, and Glu195 together coordinate Mg(2+). Lys192 bears the N6-carboxylysine mark. His285 functions as the Proton acceptor in the catalytic mechanism. Substrate is bound by residues Arg286, His318, and Ser370.

Belongs to the RuBisCO large chain family. Type I subfamily. Heterohexadecamer of 8 large chains and 8 small chains; disulfide-linked. The disulfide link is formed within the large subunit homodimers. The cofactor is Mg(2+). The disulfide bond which can form in the large chain dimeric partners within the hexadecamer appears to be associated with oxidative stress and protein turnover.

The protein resides in the plastid. Its subcellular location is the chloroplast. It carries out the reaction 2 (2R)-3-phosphoglycerate + 2 H(+) = D-ribulose 1,5-bisphosphate + CO2 + H2O. It catalyses the reaction D-ribulose 1,5-bisphosphate + O2 = 2-phosphoglycolate + (2R)-3-phosphoglycerate + 2 H(+). Functionally, ruBisCO catalyzes two reactions: the carboxylation of D-ribulose 1,5-bisphosphate, the primary event in carbon dioxide fixation, as well as the oxidative fragmentation of the pentose substrate in the photorespiration process. Both reactions occur simultaneously and in competition at the same active site. This Lupinus albus (White lupine) protein is Ribulose bisphosphate carboxylase large chain.